We begin with the raw amino-acid sequence, 327 residues long: Petrobactin synthase (327 aa).

The enzyme catalyses N(8)-citryl-spermidine + 3,4-dihydroxybenzoyl-[aryl-carrier protein] = N(1)-(3,4-dihydroxybenzoyl)-N(8)-citryl-spermidine + holo-[aryl-carrier protein] + H(+). It catalyses the reaction N(8),N'(8)-citryl-bis(spermidine) + 3,4-dihydroxybenzoyl-[aryl-carrier protein] = N(1)-(3,4-dihydroxybenzoyl)-N(8),N'(8)-citryl-bis(spermidine) + holo-[aryl-carrier protein] + H(+). It carries out the reaction N(1)-(3,4-dihydroxybenzoyl)-N(8),N'(8)-citryl-bis(spermidine) + 3,4-dihydroxybenzoyl-[aryl-carrier protein] = petrobactin + holo-[aryl-carrier protein] + H(+). It participates in siderophore biosynthesis; petrobactin biosynthesis. In terms of biological role, involved in the biosynthesis of petrobactin, a catecholate siderophore that functions in both iron acquisition and virulence. Transfers the activated 3,4-dihydroxybenzoate (3,4-DHBA) moiety from 3,4-DHBA-loaded AsbD to different receipient molecules, including N-citryl-spermidine, N8,N'8-citryl-bis(spermidine) and N1-(3,4-dihydroxybenzoyl)-N8,N'8-citryl-bis(spermidine). Also catalyzes the transfer of the activated 3,4-DHBA moiety from 3,4-DHBA-loaded AsbD to spermidine to generate DHB-spermidine (DHB-SP). This Bacillus anthracis protein is Petrobactin synthase.